The following is a 156-amino-acid chain: ATP synthase subunit b (156 aa).

A helical membrane pass occupies residues 3–23 (INFTLLAQALAFAGLIWIIAT).

It belongs to the ATPase B chain family. As to quaternary structure, F-type ATPases have 2 components, F(1) - the catalytic core - and F(0) - the membrane proton channel. F(1) has five subunits: alpha(3), beta(3), gamma(1), delta(1), epsilon(1). F(0) has three main subunits: a(1), b(2) and c(10-14). The alpha and beta chains form an alternating ring which encloses part of the gamma chain. F(1) is attached to F(0) by a central stalk formed by the gamma and epsilon chains, while a peripheral stalk is formed by the delta and b chains.

The protein localises to the cell inner membrane. In terms of biological role, f(1)F(0) ATP synthase produces ATP from ADP in the presence of a proton or sodium gradient. F-type ATPases consist of two structural domains, F(1) containing the extramembraneous catalytic core and F(0) containing the membrane proton channel, linked together by a central stalk and a peripheral stalk. During catalysis, ATP synthesis in the catalytic domain of F(1) is coupled via a rotary mechanism of the central stalk subunits to proton translocation. Functionally, component of the F(0) channel, it forms part of the peripheral stalk, linking F(1) to F(0). This Stenotrophomonas maltophilia (strain R551-3) protein is ATP synthase subunit b.